We begin with the raw amino-acid sequence, 504 residues long: MVLADLGRKITSALRSLSNATIINEEVLNAMLKEVCTALLEADVNIKLVKQLRENVKSAIDLEEMASGLNKRKMIQHAVFKELVKLVDPGVKAWTPTKGKQNVIMFVGLQGSGKTTTCSKLAYYYQRKGWKTCLICADTFRAGAFDQLKQNATKARIPFYGSYTEMDPVIIASEGVEKFKNENFEIIIVDTSGRHKQEDSLFEEMLQVSNAIQPDNIVYVMDASIGQACEAQAKAFKDKVDVASVIVTKLDGHAKGGGALSAVAATKSPIIFIGTGEHIDDFEPFKTQPFISKLLGMGDIEGLIDKVNELKLDDNEALIEKLKHGQFTLRDMYEQFQNIMKMGPFSQILGMIPGFGTDFMSKGNEQESMARLKKLMTIMDSMNDQELDSTDGAKVFSKQPGRIQRVARGSGVSTRDVQELLTQYTKFAQMVKKMGGIKGLFKGGDMSKNVSQSQMAKLNQQMAKMMDPRVLHHMGGMAGLQSMMRQFQQGAAGNMKGMMGFNNM.

Positions 1–295 (MVLADLGRKI…KTQPFISKLL (295 aa)) are NG-domain. GTP-binding positions include 108-115 (GLQGSGKT), 190-194 (DTSGR), and 248-251 (TKLD). The segment at 296 to 504 (GMGDIEGLID…MKGMMGFNNM (209 aa)) is M-domain.

This sequence belongs to the GTP-binding SRP family. SRP54 subfamily. Component of a signal recognition particle (SRP) complex that consists of a 7SL RNA molecule of 300 nucleotides and six protein subunits: SRP72, SRP68, SRP54, SRP19, SRP14 and SRP9. Interacts with RNPS1. Interacts with the SRP receptor subunit SRPRA.

It is found in the nucleus speckle. The protein localises to the cytoplasm. The protein resides in the endoplasmic reticulum. The catalysed reaction is GTP + H2O = GDP + phosphate + H(+). Its function is as follows. Component of the signal recognition particle (SRP) complex, a ribonucleoprotein complex that mediates the cotranslational targeting of secretory and membrane proteins to the endoplasmic reticulum (ER). As part of the SRP complex, associates with the SRP receptor (SR) component SRPRA to target secretory proteins to the endoplasmic reticulum membrane. Binds to the signal sequence of presecretory proteins when they emerge from the ribosomes. Displays basal GTPase activity, and stimulates reciprocal GTPase activation of the SR subunit SRPRA. Forms a guanosine 5'-triphosphate (GTP)-dependent complex with the SR subunit SRPRA. SR compaction and GTPase mediated rearrangement of SR drive SRP-mediated cotranslational protein translocation into the ER. Requires the presence of SRP9/SRP14 and/or SRP19 to stably interact with RNA. Plays a role in proliferation and differentiation of granulocytic cells, neutrophils migration capacity and exocrine pancreas development. The polypeptide is Signal recognition particle subunit SRP54 (Srp54) (Mus musculus (Mouse)).